The sequence spans 425 residues: Proline--tRNA ligase (425 aa).

This sequence belongs to the class-II aminoacyl-tRNA synthetase family. ProS type 2 subfamily. In terms of assembly, homodimer.

Its subcellular location is the cytoplasm. The enzyme catalyses tRNA(Pro) + L-proline + ATP = L-prolyl-tRNA(Pro) + AMP + diphosphate. Catalyzes the attachment of proline to tRNA(Pro) in a two-step reaction: proline is first activated by ATP to form Pro-AMP and then transferred to the acceptor end of tRNA(Pro). This chain is Proline--tRNA ligase, found in Wolbachia sp. subsp. Brugia malayi (strain TRS).